Here is a 1013-residue protein sequence, read N- to C-terminus: Alpha-2-macroglobulin homolog (1013 aa).

The interval 804 to 844 (AQRGANGERDGLRETVPVRPAGARQLLSGSGSVGADKAGGN) is disordered.

It belongs to the protease inhibitor I39 (alpha-2-macroglobulin) family. Bacterial alpha-2-macroglobulin subfamily.

The sequence is that of Alpha-2-macroglobulin homolog from Deinococcus radiodurans (strain ATCC 13939 / DSM 20539 / JCM 16871 / CCUG 27074 / LMG 4051 / NBRC 15346 / NCIMB 9279 / VKM B-1422 / R1).